The following is a 482-amino-acid chain: G patch domain-containing protein 2-like (482 aa).

Residues serine 31, serine 86, and serine 88 each carry the phosphoserine modification. Position 91 is a phosphothreonine (threonine 91). Residue lysine 196 forms a Glycyl lysine isopeptide (Lys-Gly) (interchain with G-Cter in SUMO2) linkage. Positions 198–214 (GRKERMECETDEQKQGS) are enriched in basic and acidic residues. Disordered stretches follow at residues 198–247 (GRKE…DDEQ) and 413–482 (KRKR…PGYS). The span at 220-230 (ECETSSVCSSS) shows a compositional bias: low complexity. Residues 439–450 (TPASQAPKSPSS) are compositionally biased toward polar residues. A phosphoserine mark is found at serine 447 and serine 449. Positions 456 to 469 (TSAAEKATDATTAT) are enriched in low complexity.

This chain is G patch domain-containing protein 2-like (GPATCH2L), found in Homo sapiens (Human).